The chain runs to 612 residues: Sulfite reductase [NADPH] flavoprotein alpha-component (612 aa).

Residues 64 to 202 (VTLISASQTG…QAQQWRQQVV (139 aa)) form the Flavodoxin-like domain. Residues 70–75 (SQTGNA), 117–120 (STQG), and 153–162 (LGDTSYEHFC) each bind FMN. Positions 247–461 (TAPLTAQLSV…IEHNDNFRLP (215 aa)) constitute an FAD-binding FR-type domain. Residues threonine 335, lysine 369, 399–402 (RLYS), 417–419 (TVG), tyrosine 423, and 432–435 (GGAS) contribute to the FAD site. NADP(+) is bound by residues 532 to 533 (SR), 538 to 542 (KIYVQ), and aspartate 574. Tyrosine 612 serves as a coordination point for FAD.

It belongs to the NADPH-dependent sulphite reductase flavoprotein subunit CysJ family. The protein in the N-terminal section; belongs to the flavodoxin family. In the C-terminal section; belongs to the flavoprotein pyridine nucleotide cytochrome reductase family. In terms of assembly, alpha(8)-beta(8). The alpha component is a flavoprotein, the beta component is a hemoprotein. The cofactor is FAD. Requires FMN as cofactor.

The enzyme catalyses hydrogen sulfide + 3 NADP(+) + 3 H2O = sulfite + 3 NADPH + 4 H(+). The protein operates within sulfur metabolism; hydrogen sulfide biosynthesis; hydrogen sulfide from sulfite (NADPH route): step 1/1. In terms of biological role, component of the sulfite reductase complex that catalyzes the 6-electron reduction of sulfite to sulfide. This is one of several activities required for the biosynthesis of L-cysteine from sulfate. The flavoprotein component catalyzes the electron flow from NADPH -&gt; FAD -&gt; FMN to the hemoprotein component. The chain is Sulfite reductase [NADPH] flavoprotein alpha-component from Yersinia pestis bv. Antiqua (strain Nepal516).